We begin with the raw amino-acid sequence, 101 residues long: Small ribosomal subunit protein uS14 (101 aa).

It belongs to the universal ribosomal protein uS14 family. In terms of assembly, part of the 30S ribosomal subunit. Contacts proteins S3 and S10.

Binds 16S rRNA, required for the assembly of 30S particles and may also be responsible for determining the conformation of the 16S rRNA at the A site. In Pseudoalteromonas atlantica (strain T6c / ATCC BAA-1087), this protein is Small ribosomal subunit protein uS14.